The sequence spans 249 residues: Cell division protein DivIB (249 aa).

Over 1–19 the chain is Cytoplasmic; that stretch reads MKEENEYIVKRRKKRRRKR. The chain crosses the membrane as a helical span at residues 20-40; the sequence is ITIFLFLLICILVTLCLKLPY. Residues 41–109 form the POTRA domain; that stretch reads FNIKYINVEG…NTIDIIVKER (69 aa). The Extracellular segment spans residues 41–249; sequence FNIKYINVEG…KGNPVYSLQQ (209 aa).

The protein belongs to the FtsQ/DivIB family. DivIB subfamily.

The protein resides in the cell membrane. Its function is as follows. Cell division protein that may be involved in stabilizing or promoting the assembly of the division complex. The chain is Cell division protein DivIB from Clostridium acetobutylicum (strain ATCC 824 / DSM 792 / JCM 1419 / IAM 19013 / LMG 5710 / NBRC 13948 / NRRL B-527 / VKM B-1787 / 2291 / W).